A 30-amino-acid polypeptide reads, in one-letter code: Hainantoxin F7-28.42 (30 aa).

Expressed by the venom gland.

The protein localises to the secreted. The protein is Hainantoxin F7-28.42 of Cyriopagopus hainanus (Chinese bird spider).